Reading from the N-terminus, the 114-residue chain is Small ribosomal subunit protein bS16 (114 aa).

Residues 87–114 (AFREQPVQSAPKKKAQERAAERAKAAEA) are disordered. The segment covering 100-114 (KAQERAAERAKAAEA) has biased composition (basic and acidic residues).

Belongs to the bacterial ribosomal protein bS16 family.

The sequence is that of Small ribosomal subunit protein bS16 from Acidiphilium cryptum (strain JF-5).